The sequence spans 359 residues: Tropomodulin-1 (359 aa).

The segment at 36–61 (ELDPDNALLPAGLRQKDQTTKAPTGP) is disordered. A tropomyosin-binding region spans residues 39-138 (PDNALLPAGL…CDIAAILGMH (100 aa)).

It belongs to the tropomodulin family. In terms of assembly, binds to the N-terminus of tropomyosin and to actin. Interacts with FLII. In terms of tissue distribution, highly expressed in the erythrocyte, heart and skeletal muscle.

The protein localises to the cytoplasm. The protein resides in the cytoskeleton. Functionally, blocks the elongation and depolymerization of the actin filaments at the pointed end. The Tmod/TM complex contributes to the formation of the short actin protofilament, which in turn defines the geometry of the membrane skeleton. The sequence is that of Tropomodulin-1 (Tmod1) from Mus musculus (Mouse).